Reading from the N-terminus, the 194-residue chain is Ribonuclease HII (194 aa).

The region spanning 1–194 (MTVGVDEVGR…RLFPRDDGLR (194 aa)) is the RNase H type-2 domain. 3 residues coordinate a divalent metal cation: aspartate 6, glutamate 7, and aspartate 102.

Belongs to the RNase HII family. Requires Mn(2+) as cofactor. Mg(2+) is required as a cofactor.

Its subcellular location is the cytoplasm. It carries out the reaction Endonucleolytic cleavage to 5'-phosphomonoester.. In terms of biological role, endonuclease that specifically degrades the RNA of RNA-DNA hybrids. This Synechococcus sp. (strain WH7803) protein is Ribonuclease HII.